We begin with the raw amino-acid sequence, 312 residues long: Serine protease 48 (312 aa).

The first 22 residues, 1–22 (MGPAGLKVLLLLFLGAFQGSFT), serve as a signal peptide directing secretion. Residues 40-276 (IVGGQDAALG…YQKWISAIIS (237 aa)) form the Peptidase S1 domain. Residues C65 and C81 are joined by a disulfide bond. Residues H80 and D126 each act as charge relay system in the active site. A glycan (N-linked (GlcNAc...) asparagine) is linked at N149. Cystine bridges form between C160-C235, C190-C214, and C225-C253. Residue S229 is the Charge relay system of the active site. N-linked (GlcNAc...) asparagine glycosylation is present at N263.

Belongs to the peptidase S1 family.

The protein localises to the secreted. The sequence is that of Serine protease 48 (Prss48) from Mus musculus (Mouse).